Here is a 213-residue protein sequence, read N- to C-terminus: RPW8-like protein 3 (213 aa).

Residues 1–153 (MPVSEIMAGA…ITRQPTDCIC (153 aa)) enclose the RPW8 domain. A helical membrane pass occupies residues 7–23 (MAGAALGLALQVLHDAI). Coiled coils occupy residues 70 to 93 (EDLK…RRRN) and 125 to 147 (VDIK…ITRQ). Residue Asn-157 is glycosylated (N-linked (GlcNAc...) asparagine).

This sequence belongs to the plant RPW8 protein family.

It is found in the membrane. Probable disease resistance (R) protein. This chain is RPW8-like protein 3, found in Arabidopsis thaliana (Mouse-ear cress).